Here is a 275-residue protein sequence, read N- to C-terminus: Reticulon-like protein B1 (275 aa).

Basic and acidic residues-rich tracts occupy residues 1-10 (MAEEHKHDES) and 20-38 (VVER…HHGG). Positions 1–68 (MAEEHKHDES…PSSPSSSMKS (68 aa)) are disordered. Position 2 is an N-acetylalanine (A2). A compositionally biased stretch (low complexity) spans 59–68 (PSSPSSSMKS). Residues 89–274 (PADIFMWKNK…PLGPLKNKKK (186 aa)) form the Reticulon domain. The next 3 helical transmembrane spans lie at 99–119 (KMSG…ELME), 120–140 (YHLL…LFLW), and 194–214 (FLIA…FNFL).

In terms of assembly, interacts with VirB2. As to expression, predominantly expressed in root tissues.

The protein resides in the endoplasmic reticulum membrane. The protein localises to the cell membrane. In terms of biological role, plays a role in the Agrobacterium-mediated plant transformation via its interaction with VirB2, the major component of the T-pilus. In Arabidopsis thaliana (Mouse-ear cress), this protein is Reticulon-like protein B1 (RTNLB1).